Reading from the N-terminus, the 166-residue chain is NADPH-dependent 7-cyano-7-deazaguanine reductase (166 aa).

The active-site Thioimide intermediate is the Cys57. The Proton donor role is filled by Asp64. Residues 79 to 81 and 98 to 99 contribute to the substrate site; these read VES and HE.

It belongs to the GTP cyclohydrolase I family. QueF type 1 subfamily.

Its subcellular location is the cytoplasm. It catalyses the reaction 7-aminomethyl-7-carbaguanine + 2 NADP(+) = 7-cyano-7-deazaguanine + 2 NADPH + 3 H(+). It functions in the pathway tRNA modification; tRNA-queuosine biosynthesis. Its function is as follows. Catalyzes the NADPH-dependent reduction of 7-cyano-7-deazaguanine (preQ0) to 7-aminomethyl-7-deazaguanine (preQ1). The chain is NADPH-dependent 7-cyano-7-deazaguanine reductase from Staphylococcus aureus (strain JH1).